Here is a 338-residue protein sequence, read N- to C-terminus: Acyl-CoA Delta(11) desaturase (338 aa).

2 helical membrane-spanning segments follow: residues 33–53 and 61–81; these read IVYF…YGLY and WATV…VTAG. Residues 83–88 carry the Histidine box-1 motif; it reads HRLWSH. Residues 97-117 form a helical membrane-spanning segment; the sequence is LQILLMVMNSLAFQNTVIDWV. The Histidine box-2 motif lies at 120–124; that stretch reads HRLHH. Helical transmembrane passes span 181–201 and 212–234; these read AIPF…VYGW and AMLR…HIYG. The Histidine box-3 motif lies at 260–264; it reads HNYHH. The segment at 318–338 is disordered; the sequence is TNLWGLEDVDTPEDLKNTKGE.

Belongs to the fatty acid desaturase type 1 family. The cofactor is Fe cation. In terms of tissue distribution, detected in the pheromone gland.

It is found in the membrane. The catalysed reaction is an 11,12-saturated fatty acyl-CoA + 2 Fe(II)-[cytochrome b5] + O2 + 2 H(+) = an (11Z)-Delta(11)-fatty acyl-CoA + 2 Fe(III)-[cytochrome b5] + 2 H2O. Its function is as follows. Catalyzes the formation of delta(11) fatty acyl precursors in the pheromone gland, and has high activity towards palmitic acid and stearic acid. The protein is Acyl-CoA Delta(11) desaturase of Spodoptera littoralis (Egyptian cotton leafworm).